Here is a 163-residue protein sequence, read N- to C-terminus: Epithelial membrane protein 3 (163 aa).

Residues 4 to 24 form a helical membrane-spanning segment; the sequence is LLLVVSALHILILILLFVATL. Asn-47 and Asn-56 each carry an N-linked (GlcNAc...) asparagine glycan. 3 helical membrane passes run 66–86, 100–120, and 139–159; these read VQVL…LFMF, TGLC…IYAI, and FALA…YIHL.

It belongs to the PMP-22/EMP/MP20 family.

The protein resides in the membrane. Its function is as follows. Probably involved in cell proliferation and cell-cell interactions. This is Epithelial membrane protein 3 (EMP3) from Homo sapiens (Human).